We begin with the raw amino-acid sequence, 293 residues long: Protease HtpX homolog (293 aa).

2 helical membrane passes run 4 to 24 (IFLF…VLSL) and 39 to 59 (PMLL…SLLI). H144 is a Zn(2+) binding site. Residue E145 is part of the active site. Position 148 (H148) interacts with Zn(2+). 2 helical membrane passes run 159–179 (LVQG…GYFV) and 200–220 (ITVL…VAWF). E225 provides a ligand contact to Zn(2+).

The protein belongs to the peptidase M48B family. The cofactor is Zn(2+).

Its subcellular location is the cell inner membrane. The protein is Protease HtpX homolog of Herminiimonas arsenicoxydans.